The primary structure comprises 1873 residues: Replicase polyprotein 1a (1873 aa).

Active-site for leader protease activity residues include Cys344 and His393. The 180-residue stretch at 495-674 (SFNQKSYSNH…HSCQTLKDIL (180 aa)) folds into the Alphavirus-like MT domain. The segment at 1356-1381 (VMPPLEEVETPKRSVGRPSSKQDDIE) is disordered. Positions 1538 to 1705 (RGMYSNERCR…FFRKQDLNYD (168 aa)) constitute a (+)RNA virus helicase ATP-binding domain. The (+)RNA virus helicase C-terminal domain occupies 1706-1873 (TYTYRCPLDT…LKDYHFRQCL (168 aa)).

The catalysed reaction is ATP + H2O = ADP + phosphate + H(+). In Beta vulgaris (Sugar beet), this protein is Replicase polyprotein 1a.